The chain runs to 312 residues: Urease accessory protein UreD (312 aa).

A disordered region spans residues 1 to 50; it reads MRPLAPDARCAPSRPGRGPWYARRPVTTPSDPPAALREPPPPARRAGKAG.

This sequence belongs to the UreD family. In terms of assembly, ureD, UreF and UreG form a complex that acts as a GTP-hydrolysis-dependent molecular chaperone, activating the urease apoprotein by helping to assemble the nickel containing metallocenter of UreC. The UreE protein probably delivers the nickel.

It is found in the cytoplasm. Its function is as follows. Required for maturation of urease via the functional incorporation of the urease nickel metallocenter. The chain is Urease accessory protein UreD from Sorangium cellulosum (strain So ce56) (Polyangium cellulosum (strain So ce56)).